Reading from the N-terminus, the 1133-residue chain is uncharacterized protein (1133 aa).

Disordered stretches follow at residues Q33–S83, P305–S629, G679–R723, and I736–V817. Low complexity predominate over residues N39–S83. A DNA-binding region (NDT80) is located at residues N40 to N308. The segment covering P305–P316 has biased composition (polar residues). Residues I317–S384 are compositionally biased toward low complexity. Polar residues predominate over residues I401–Y417. Residues N418–N452 are compositionally biased toward low complexity. Residues H453–F470 are compositionally biased toward polar residues. Composition is skewed to low complexity over residues N473–S615 and N686–N714. A compositionally biased stretch (polar residues) spans I736–T747. The span at Q757 to Q771 shows a compositional bias: pro residues. Residues P772–P808 show a composition bias toward low complexity. Residues S909–L1020 enclose the Peptidase S74 domain. A helical transmembrane segment spans residues I1055–I1075. The segment at S1107–K1133 is disordered.

The protein resides in the membrane. This is an uncharacterized protein from Dictyostelium discoideum (Social amoeba).